The chain runs to 744 residues: Catalase-peroxidase (744 aa).

The disordered stretch occupies residues 1–21 (MANESKCPFHQTAGGGTSNRD). The segment at residues 91 to 241 (WHSAGTYRIG…LAAVQMGLIY (151 aa)) is a cross-link (tryptophyl-tyrosyl-methioninium (Trp-Tyr) (with M-267)). The Proton acceptor role is filled by His92. A cross-link (tryptophyl-tyrosyl-methioninium (Tyr-Met) (with W-91)) is located at residues 241–267 (YVNPEGPEGNPDPVASGKDIRDTFGRM). Residue His282 coordinates heme b. Positions 361 to 387 (GAHQWRPKDGKGANTVPDAHDTTKRHA) are disordered.

This sequence belongs to the peroxidase family. Peroxidase/catalase subfamily. Homodimer or homotetramer. Requires heme b as cofactor. Formation of the three residue Trp-Tyr-Met cross-link is important for the catalase, but not the peroxidase activity of the enzyme.

The catalysed reaction is H2O2 + AH2 = A + 2 H2O. The enzyme catalyses 2 H2O2 = O2 + 2 H2O. Functionally, bifunctional enzyme with both catalase and broad-spectrum peroxidase activity. This chain is Catalase-peroxidase, found in Pseudomonas entomophila (strain L48).